The sequence spans 497 residues: Tripartite motif-containing protein 5 (497 aa).

Alanine 2 is modified (N-acetylalanine). The RING-type zinc finger occupies 15–60 (CPICLELLTEPLSLPCGHSFCQACITANHRKSMLYKEGERSCPVCR). Phosphoserine is present on serine 87. The B box-type zinc-finger motif lies at 92 to 133 (LKVDHCARHGEKLLLFCQEDSKVICWLCERSQEHRGHHTFLM). Residues cysteine 97, histidine 100, cysteine 119, and histidine 125 each coordinate Zn(2+). The stretch at 137 to 225 (AQEYHVKLQT…LTKSETEMVQ (89 aa)) forms a coiled coil. Residues 187–200 (FEQLREILDWEESN) form a required for interaction with GABARAP and for autophagy region. One can recognise a B30.2/SPRY domain in the interval 283–497 (LKGMLDMFRE…VPMTLCSPSS (215 aa)).

It belongs to the TRIM/RBCC family. As to quaternary structure, can form homodimers and homotrimers. In addition to lower-order dimerization, also exhibits a higher-order multimerization and both low- and high-order multimerizations are essential for its restriction activity. Interacts with BTBD1 and BTBD2. Interacts with PSMC4, PSMC5, PSMD7 and HSPA8/HSC70. Interacts (via B30.2/SPRY domain) with HSPA1A/B. Interacts with PSMC2, MAP3K7/TAK1, TAB2 and TAB3. Interacts with SQSTM1. Interacts with TRIM6 and TRIM34. Interacts with ULK1 (phosphorylated form), GABARAP, GABARAPL1, GABARAPL2, MAP1LC3A, MAP1LC3C and BECN1. Degraded in a proteasome-independent fashion in the absence of viral infection but in a proteasome-dependent fashion following exposure to restriction sensitive virus. Post-translationally, autoubiquitinated in a RING finger- and UBE2D2-dependent manner. Monoubiquitinated by TRIM21. Deubiquitinated by Yersinia YopJ. Ubiquitination may not lead to proteasomal degradation.

Its subcellular location is the cytoplasm. It is found in the nucleus. The enzyme catalyses S-ubiquitinyl-[E2 ubiquitin-conjugating enzyme]-L-cysteine + [acceptor protein]-L-lysine = [E2 ubiquitin-conjugating enzyme]-L-cysteine + N(6)-ubiquitinyl-[acceptor protein]-L-lysine.. The protein operates within protein modification; protein ubiquitination. Functionally, capsid-specific restriction factor that prevents infection from non-host-adapted retroviruses. Blocks viral replication early in the life cycle, after viral entry but before reverse transcription. In addition to acting as a capsid-specific restriction factor, also acts as a pattern recognition receptor that activates innate immune signaling in response to the retroviral capsid lattice. Binding to the viral capsid triggers its E3 ubiquitin ligase activity, and in concert with the heterodimeric ubiquitin conjugating enzyme complex UBE2V1-UBE2N (also known as UBC13-UEV1A complex) generates 'Lys-63'-linked polyubiquitin chains, which in turn are catalysts in the autophosphorylation of the MAP3K7/TAK1 complex (includes TAK1, TAB2, and TAB3). Activation of the MAP3K7/TAK1 complex by autophosphorylation results in the induction and expression of NF-kappa-B and MAPK-responsive inflammatory genes, thereby leading to an innate immune response in the infected cell. Plays a role in regulating autophagy through activation of autophagy regulator BECN1 by causing its dissociation from its inhibitors BCL2 and TAB2. This is Tripartite motif-containing protein 5 (TRIM5) from Papio anubis (Olive baboon).